Consider the following 351-residue polypeptide: Putative [LysW]-L-2-aminoadipate/[LysW]-L-glutamate phosphate reductase (351 aa).

Residues 10 to 13 (SGFT) and 34 to 36 (SRK) contribute to the NADP(+) site. Residue cysteine 151 is part of the active site. Asparagine 318 provides a ligand contact to NADP(+).

It belongs to the NAGSA dehydrogenase family. Type 1 subfamily. LysY sub-subfamily.

It is found in the cytoplasm. The catalysed reaction is [amino-group carrier protein]-C-terminal-N-(1-carboxy-5-oxopentan-1-yl)-L-glutamine + phosphate + NADP(+) = [amino-group carrier protein]-C-terminal-N-(1-carboxy-5-phosphooxy-5-oxopentan-1-yl)-L-glutamine + NADPH + H(+). It carries out the reaction [amino-group carrier protein]-C-terminal-gamma-(L-glutamyl-5-semialdehyde)-L-glutamate + phosphate + NADP(+) = [amino-group carrier protein]-C-terminal-gamma-(5-phospho-L-glutamyl)-L-glutamate + NADPH + H(+). It functions in the pathway amino-acid biosynthesis; L-lysine biosynthesis via AAA pathway; L-lysine from L-alpha-aminoadipate (Thermus route): step 3/5. Its pathway is amino-acid biosynthesis; L-arginine biosynthesis. Functionally, involved in both the arginine and lysine biosynthetic pathways. The polypeptide is Putative [LysW]-L-2-aminoadipate/[LysW]-L-glutamate phosphate reductase (Pyrobaculum calidifontis (strain DSM 21063 / JCM 11548 / VA1)).